The chain runs to 370 residues: 3-isopropylmalate dehydrogenase (370 aa).

Position 77-90 (77-90 (GPKWDAVPYEVRPE)) interacts with NAD(+). Positions 97, 107, 135, and 226 each coordinate substrate. Mg(2+) contacts are provided by Asp226, Asp250, and Asp254. Residue 290–302 (GSAPDIAGTGVAN) coordinates NAD(+).

It belongs to the isocitrate and isopropylmalate dehydrogenases family. LeuB type 1 subfamily. As to quaternary structure, homodimer. Mg(2+) is required as a cofactor. It depends on Mn(2+) as a cofactor.

It is found in the cytoplasm. It catalyses the reaction (2R,3S)-3-isopropylmalate + NAD(+) = 4-methyl-2-oxopentanoate + CO2 + NADH. Its pathway is amino-acid biosynthesis; L-leucine biosynthesis; L-leucine from 3-methyl-2-oxobutanoate: step 3/4. Functionally, catalyzes the oxidation of 3-carboxy-2-hydroxy-4-methylpentanoate (3-isopropylmalate) to 3-carboxy-4-methyl-2-oxopentanoate. The product decarboxylates to 4-methyl-2 oxopentanoate. In Rhizobium meliloti (strain 1021) (Ensifer meliloti), this protein is 3-isopropylmalate dehydrogenase.